Here is a 344-residue protein sequence, read N- to C-terminus: Ferrochelatase (344 aa).

2 residues coordinate Fe cation: His196 and Glu277.

Belongs to the ferrochelatase family.

The protein resides in the cytoplasm. The catalysed reaction is heme b + 2 H(+) = protoporphyrin IX + Fe(2+). Its pathway is porphyrin-containing compound metabolism; protoheme biosynthesis; protoheme from protoporphyrin-IX: step 1/1. Catalyzes the ferrous insertion into protoporphyrin IX. The sequence is that of Ferrochelatase from Synechococcus sp. (strain JA-2-3B'a(2-13)) (Cyanobacteria bacterium Yellowstone B-Prime).